Here is a 207-residue protein sequence, read N- to C-terminus: Vexin (207 aa).

The disordered stretch occupies residues 65–104 (RDTGDRRWLQTGRLQTARPPGAHPTKTPSRPVGISEPKTS).

This sequence belongs to the vexin family.

Its subcellular location is the cell membrane. It localises to the nucleus. In terms of biological role, required for neurogenesis in the neural plate and retina. Strongly cooperates with neural bHLH factors to promote neurogenesis. The polypeptide is Vexin (Mus musculus (Mouse)).